Consider the following 139-residue polypeptide: Protein archease (139 aa).

Ca(2+) is bound by residues D12, D138, and I139.

Belongs to the archease family.

In terms of biological role, activates the tRNA-splicing ligase complex by facilitating the enzymatic turnover of catalytic subunit RtcB. Acts by promoting the guanylylation of RtcB, a key intermediate step in tRNA ligation. Can also alter the NTP specificity of RtcB such that ATP, dGTP or ITP is used efficiently. In Sulfurisphaera tokodaii (strain DSM 16993 / JCM 10545 / NBRC 100140 / 7) (Sulfolobus tokodaii), this protein is Protein archease.